Consider the following 172-residue polypeptide: Adenylate kinase isoenzyme 6 (172 aa).

ATP-binding residues include Gly-13, Gly-15, Lys-16, Thr-17, and Thr-18. Residues 33–56 (NVGDLAREGHLYDGYDEEYGCPIL) form an NMPbind region. The LID stretch occupies residues 108 to 118 (TRGYHEKKLQD). Position 109 (Arg-109) interacts with ATP.

It belongs to the adenylate kinase family. AK6 subfamily. Monomer and homodimer. Interacts with small ribosomal subunit protein uS11. Not a structural component of 43S pre-ribosomes, but transiently interacts with them by binding to uS11. Interacts with COIL (via C-terminus).

Its subcellular location is the cytoplasm. The protein localises to the nucleus. The protein resides in the nucleoplasm. It localises to the cajal body. It catalyses the reaction AMP + ATP = 2 ADP. It carries out the reaction ATP + H2O = ADP + phosphate + H(+). Functionally, broad-specificity nucleoside monophosphate (NMP) kinase that catalyzes the reversible transfer of the terminal phosphate group between nucleoside triphosphates and monophosphates. Also has ATPase activity. Involved in the late cytoplasmic maturation steps of the 40S ribosomal particles, specifically 18S rRNA maturation. While NMP activity is not required for ribosome maturation, ATPase activity is. Associates transiently with small ribosomal subunit protein uS11. ATP hydrolysis breaks the interaction with uS11. May temporarily remove uS11 from the ribosome to enable a conformational change of the ribosomal RNA that is needed for the final maturation step of the small ribosomal subunit. Its NMP activity may have a role in nuclear energy homeostasis. May be involved in regulation of Cajal body (CB) formation. This chain is Adenylate kinase isoenzyme 6, found in Rattus norvegicus (Rat).